The primary structure comprises 203 residues: Molybdenum cofactor guanylyltransferase (203 aa).

Residues 12–14 (LAG), lysine 25, asparagine 53, aspartate 71, and aspartate 101 each bind GTP. Aspartate 101 provides a ligand contact to Mg(2+).

This sequence belongs to the MobA family. As to quaternary structure, monomer. Requires Mg(2+) as cofactor.

The protein resides in the cytoplasm. The enzyme catalyses Mo-molybdopterin + GTP + H(+) = Mo-molybdopterin guanine dinucleotide + diphosphate. Its function is as follows. Transfers a GMP moiety from GTP to Mo-molybdopterin (Mo-MPT) cofactor (Moco or molybdenum cofactor) to form Mo-molybdopterin guanine dinucleotide (Mo-MGD) cofactor. The chain is Molybdenum cofactor guanylyltransferase from Cupriavidus metallidurans (strain ATCC 43123 / DSM 2839 / NBRC 102507 / CH34) (Ralstonia metallidurans).